Reading from the N-terminus, the 724-residue chain is MADEDLIFCLEGVDGGRCSRAGHNADSDTDSDDDEGYFICPITDDHMSNQNVSSKVQSYYSNLTKTECGSTGSPASSFHFKEAWKHAIEKAKHMPDPWAEFHLEDIATEHATRHRYNAVTGEWLKDEVLIKMASQPFGRGAMRECFRTKKLSNFLHAQQWKGASNYVAKRYIEPVDRSVYFEDVQLQMEAKLWGEDYNRHKPPKQVDIMQMCIIELKDRPGQPLFHLEHYIEGKYIKYNSNSGFVRDDNIRLTPQAFSHFTFERSGHQLIVVDIQGVGDLYTDPQIHTEKGTDFGDGNLGVRGMALFFYSHACNRICQSMGLTPFDLSPREQDAVNQSTRLLQSAKTILRGTEEKCGSPRIRTLSSSRPPLLLRLSENSGDENMSDVTFDSLPSSPSSATPHSQKLDHLHWPVFGDLDNMGPRDHDRMDNHRDSENSGDSGYPSEKRSDLDDPEPREHGHSNGNRRHESDEDSLGSSGRVCVETWNLLNPSRLHLPRPSAVALEVQRLNALDLGRKIGKSVLGKVHLAMVRYHEGGRFCEKDEEWDRESAIFHLEHAADLGELEAIVGLGLMYSQLPHHILADVSLKETEENKTKGFDYLLKAAEAGDRHSMILVARAFDTGLNLSPDRCQDWSEALHWYNTALETTDCDEGGEYDGIQDEPQYALLAREAEMLLTGGFGLDKNPQRSGDLYTQAAEAAMEAMKGRLANQYYEKAEEAWAQMEE.

Position 2 is an N-acetylalanine (Ala2). The residue at position 27 (Ser27) is a Phosphoserine. The residue at position 61 (Ser61) is a Phosphoserine; by autocatalysis. Residues Ser70, Ser73, and Ser77 each carry the phosphoserine modification. A calmodulin-binding region spans residues 80–93 (FKEAWKHAIEKAKH). The Alpha-type protein kinase domain occupies 115–325 (RYNAVTGEWL…ICQSMGLTPF (211 aa)). Ser242 carries the phosphoserine modification. Residue 295–301 (GDGNLGV) coordinates ATP. Residues Thr347 and Thr352 each carry the phosphothreonine; by autocatalysis modification. The tract at residues 353–476 (EEKCGSPRIR…HESDEDSLGS (124 aa)) is disordered. Position 358 is a phosphoserine; by MAPK13 and CDK1 (Ser358). Positions 358 to 376 (SPRIRTLSSSRPPLLLRLS) are enriched in low complexity. At Ser365 the chain carries Phosphoserine; by autocatalysis, RPS6KA1 and RPS6KB1. Positions 385–403 (SDVTFDSLPSSPSSATPHS) are enriched in polar residues. The residue at position 391 (Ser391) is a Phosphoserine. At Ser397 the chain carries Phosphoserine; by AMPK. Basic and acidic residues-rich tracts occupy residues 421-435 (GPRDHDRMDNHRDSE) and 444-469 (SEKRSDLDDPEPREHGHSNGNRRHES). 3 positions are modified to phosphoserine: Ser434, Ser444, and Ser469. Residue Ser473 is modified to Phosphoserine; by autocatalysis. Ser476 carries the phosphoserine modification. The residue at position 499 (Ser499) is a Phosphoserine; by PKA.

The protein belongs to the protein kinase superfamily. Alpha-type protein kinase family. In terms of assembly, monomer or homodimer. Interacts with Calmodulin/CALM1; this interaction is strictly required for phosphorylation activity. In terms of processing, autophosphorylated at multiple residues, Thr-347 being the major site. Phosphorylated by AMP-activated protein kinase AMPK at Ser-397 leading to EEF2K activation and protein synthesis inhibition. Phosphorylated by TRPM7 at Ser-77 resulting in improved protein stability, higher EE2F phosphorylated and subsequently reduced rate of protein synthesis. Phosphorylation by other kinases such as CDK1 and MAPK13 at Ser-358 or RPS6KA1 and RPS6KB1 at Ser-365 instead decrease EEF2K activity and promote protein synthesis. As to expression, ubiquitously expressed. Particularly abundant in skeletal muscle and heart.

The enzyme catalyses [translation elongation factor 2] + ATP = [translation elongation factor 2]-phosphate + ADP + H(+). With respect to regulation, undergoes calcium/calmodulin-dependent intramolecular autophosphorylation, and this results in it becoming partially calcium/calmodulin-independent. Its function is as follows. Threonine kinase that regulates protein synthesis by controlling the rate of peptide chain elongation. Upon activation by a variety of upstream kinases including AMPK or TRPM7, phosphorylates the elongation factor EEF2 at a single site, renders it unable to bind ribosomes and thus inactive. In turn, the rate of protein synthesis is reduced. The protein is Eukaryotic elongation factor 2 kinase (Eef2k) of Mus musculus (Mouse).